The following is a 492-amino-acid chain: Probable malate:quinone oxidoreductase 1 (492 aa).

This sequence belongs to the MQO family. Requires FAD as cofactor.

The enzyme catalyses (S)-malate + a quinone = a quinol + oxaloacetate. It participates in carbohydrate metabolism; tricarboxylic acid cycle; oxaloacetate from (S)-malate (quinone route): step 1/1. This chain is Probable malate:quinone oxidoreductase 1, found in Staphylococcus epidermidis (strain ATCC 35984 / DSM 28319 / BCRC 17069 / CCUG 31568 / BM 3577 / RP62A).